The primary structure comprises 318 residues: Putative S-adenosyl-L-methionine-dependent methyltransferase BCG_0781c (318 aa).

S-adenosyl-L-methionine contacts are provided by residues D135 and 164 to 165 (DL).

The protein belongs to the UPF0677 family.

In terms of biological role, exhibits S-adenosyl-L-methionine-dependent methyltransferase activity. The sequence is that of Putative S-adenosyl-L-methionine-dependent methyltransferase BCG_0781c from Mycobacterium bovis (strain BCG / Pasteur 1173P2).